A 3658-amino-acid chain; its full sequence is E3 ubiquitin-protein ligase UPL2 (3658 aa).

The span at 884–893 shows a compositional bias: basic and acidic residues; that stretch reads DEKKSVDRAS. The disordered stretch occupies residues 884 to 914; sequence DEKKSVDRASDNSVSASSSTAERESDEDSSN. Positions 894 to 903 are enriched in low complexity; it reads DNSVSASSST. The 42-residue stretch at 1271-1312 folds into the UBA domain; it reads QPDEAIVGMIVEMGFSRSRAEDALRRVGTNSVEMAMDWLFTN. The 20-residue stretch at 1318–1337 folds into the UIM domain; it reads QEDDELAQALALSLGNSSET. 9 disordered regions span residues 1331-1360, 1702-1733, 2004-2038, 2052-2072, 2113-2204, 2293-2313, 2417-2487, 2503-2591, and 2958-2987; these read LGNS…KEPP, VSGS…SKSH, AEQL…VDEL, VDNG…RGSS, HVED…DDMV, PLFS…SAGS, ERET…EGGG, SAQG…PEVN, and SPSS…AESE. Positions 1338-1347 are enriched in basic and acidic residues; the sequence is PKLEDTEKPV. The span at 2007 to 2027 shows a compositional bias: basic and acidic residues; that stretch reads LKSEVPNEQKNTDSDERHDSH. Residues 2028-2038 show a composition bias toward polar residues; it reads GTSTSTEVDEL. Composition is skewed to acidic residues over residues 2117-2144 and 2156-2204; these read RADD…DSVE and DVED…DDMV. Polar residues predominate over residues 2297–2313; that stretch reads RPSQTGNTASVSASAGS. Residues 2422–2431 show a composition bias toward low complexity; sequence TTEVQEQQQP. Residues 2503–2518 show a composition bias toward polar residues; the sequence is SAQGQSDTSGIQNVSV. Ser2582 carries the post-translational modification Phosphoserine. Residues 3317-3658 enclose the HECT domain; sequence SPQDLKGRLN…HEANEGFGFA (342 aa). Cys3625 (glycyl thioester intermediate) is an active-site residue.

It belongs to the UPL family. TOM1/PTR1 subfamily. Widely expressed. Expressed in root, stem, cauline and rosette leaf, seedling and flower (at protein level).

The catalysed reaction is S-ubiquitinyl-[E2 ubiquitin-conjugating enzyme]-L-cysteine + [acceptor protein]-L-lysine = [E2 ubiquitin-conjugating enzyme]-L-cysteine + N(6)-ubiquitinyl-[acceptor protein]-L-lysine.. It participates in protein modification; protein ubiquitination. Its function is as follows. Probable E3 ubiquitin-protein ligase which mediates ubiquitination and subsequent proteasomal degradation of target proteins. This chain is E3 ubiquitin-protein ligase UPL2 (UPL2), found in Arabidopsis thaliana (Mouse-ear cress).